Consider the following 297-residue polypeptide: Phosphoribosylaminoimidazole-succinocarboxamide synthase (297 aa).

It belongs to the SAICAR synthetase family.

The catalysed reaction is 5-amino-1-(5-phospho-D-ribosyl)imidazole-4-carboxylate + L-aspartate + ATP = (2S)-2-[5-amino-1-(5-phospho-beta-D-ribosyl)imidazole-4-carboxamido]succinate + ADP + phosphate + 2 H(+). It participates in purine metabolism; IMP biosynthesis via de novo pathway; 5-amino-1-(5-phospho-D-ribosyl)imidazole-4-carboxamide from 5-amino-1-(5-phospho-D-ribosyl)imidazole-4-carboxylate: step 1/2. In Mycobacterium tuberculosis (strain ATCC 25177 / H37Ra), this protein is Phosphoribosylaminoimidazole-succinocarboxamide synthase.